Consider the following 303-residue polypeptide: Caspase-7 (303 aa).

A disordered region spans residues Met1 to Asp27. An N-acetylalanine modification is found at Ala2. The propeptide at Ala2 to Asp23 is N-terminally processed. Residues Glu10–Asp27 are compositionally biased toward basic and acidic residues. Ser30 is subject to Phosphoserine. Residues Lys38–Lys41 are exosite. A loop L1 region spans residues Lys76 to Arg87. His144 is an active-site residue. The residue at position 173 (Thr173) is a Phosphothreonine. Residue Cys186 is part of the active site. Residues Arg187 to Gln196 form a loop L2 region. The propeptide occupies Ser199–Asp206. Residues Val226–Gly238 form a loop L3 region. Ser239 is subject to Phosphoserine. A loop L4 region spans residues Glu274 to Ile288.

This sequence belongs to the peptidase C14A family. Heterotetramer that consists of two anti-parallel arranged heterodimers, each one formed by a 20 kDa (p20) and a 11 kDa (p11) subunit. Interacts with XIAP (via its second BIR domain); inhibiting CASP7 activity. Interacts with BIRC6/bruce. Interacts with ATXN3 (short isoform 1). Interacts with HSPA5. In terms of processing, cleavage by different proteases, such as granzyme B (GZMB), caspase-1 (CASP1), caspase-8 (CASP8) or caspase-9 (CASP9) generate the two active subunits. Its involvement in different programmed cell death processes is probably specified by the protease that activates CASP7. Cleaved and activated by initiator caspases (CASP8 and/or CASP9), leading to execution phase of apoptosis. Cleavage and maturation by GZMB regulates granzyme-mediated programmed cell death. Cleaved and activated by CASP1 in response to bacterial infection. Propeptide domains can also be cleaved efficiently by CASP3. Active heterodimers between the small subunit of caspase-7 and the large subunit of CASP3, and vice versa, also occur. Also cleaved at the N-terminus at alternative sites by CAPN1, leading to its activation. Post-translationally, phosphorylation at Ser-30 and Ser-239 by PAK2 inhibits its activity. Phosphorylation at Ser-30 prevents cleavage and activation by initiator caspase CASP9, while phosphorylation at Ser-239 prevents thiol protease activity by preventing substrate-binding. Ubiquitinated by BIRC6; this activity is inhibited by DIABLO/SMAC.

The protein resides in the cytoplasm. The protein localises to the cytosol. Its subcellular location is the nucleus. It is found in the secreted. It localises to the extracellular space. It carries out the reaction Strict requirement for an Asp residue at position P1 and has a preferred cleavage sequence of Asp-Glu-Val-Asp-|-.. Its activity is regulated as follows. During activation, the N-terminal disordered prodomain is removed by cleavage. Concomitantly, double cleavage gives rise to a large Caspase-7 subunit p20 and a small Caspase-7 subunit p11. The two large and two small subunits then assemble to form the active CASP7 complex. Can be cleaved and activated by different caspases, depending on the context. Cleaved and activated by initiator caspases (CASP8 and/or CASP9), leading to execution phase of apoptosis. Cleavage and maturation by GZMB regulates granzyme-mediated programmed cell death. Cleavage and maturation by CASP1 regulates pyroptosis. Inhibited by XIAP, which directly binds to the active site pocket and obstructs substrate entry. Phosphorylation at Ser-30 and Ser-239 by PAK2 inhibits its activity. Inhibited by BIRC6; following inhibition of BIRC6-caspase binding by DIABLO/SMAC, BIRC6 is subjected to caspase cleavage, leading to an increase in active caspases. In terms of biological role, thiol protease involved in different programmed cell death processes, such as apoptosis, pyroptosis or granzyme-mediated programmed cell death, by proteolytically cleaving target proteins. Has a marked preference for Asp-Glu-Val-Asp (DEVD) consensus sequences, with some plasticity for alternate non-canonical sequences. Its involvement in the different programmed cell death processes is probably determined by upstream proteases that activate CASP7. Acts as an effector caspase involved in the execution phase of apoptosis: following cleavage and activation by initiator caspases (CASP8 and/or CASP9), mediates execution of apoptosis by catalyzing cleavage of proteins, such as CLSPN, PARP1, PTGES3 and YY1. Compared to CASP3, acts as a minor executioner caspase and cleaves a limited set of target proteins. Acts as a key regulator of the inflammatory response in response to bacterial infection by catalyzing cleavage and activation of the sphingomyelin phosphodiesterase SMPD1 in the extracellular milieu, thereby promoting membrane repair. Regulates pyroptosis in intestinal epithelial cells: cleaved and activated by CASP1 in response to S.typhimurium infection, promoting its secretion to the extracellular milieu, where it catalyzes activation of SMPD1, generating ceramides that repair membranes and counteract the action of gasdermin-D (GSDMD) pores. Regulates granzyme-mediated programmed cell death in hepatocytes: cleaved and activated by granzyme B (GZMB) in response to bacterial infection, promoting its secretion to the extracellular milieu, where it catalyzes activation of SMPD1, generating ceramides that repair membranes and counteract the action of perforin (PRF1) pores. Following cleavage by CASP1 in response to inflammasome activation, catalyzes processing and inactivation of PARP1, alleviating the transcription repressor activity of PARP1. Acts as an inhibitor of type I interferon production during virus-induced apoptosis by mediating cleavage of antiviral proteins CGAS, IRF3 and MAVS, thereby preventing cytokine overproduction. Cleaves and activates sterol regulatory element binding proteins (SREBPs). Cleaves phospholipid scramblase proteins XKR4, XKR8 and XKR9. Cleaves BIRC6 following inhibition of BIRC6-caspase binding by DIABLO/SMAC. The polypeptide is Caspase-7 (CASP7) (Mesocricetus auratus (Golden hamster)).